A 210-amino-acid polypeptide reads, in one-letter code: Large ribosomal subunit protein uL4 (210 aa).

The segment at 41–79 (MANARQGTASTKTRAEVRGGGRKPWRQKGTGRARAGSNR) is disordered. Polar residues predominate over residues 43 to 52 (NARQGTASTK). The segment covering 60-71 (GGRKPWRQKGTG) has biased composition (basic residues).

This sequence belongs to the universal ribosomal protein uL4 family. In terms of assembly, part of the 50S ribosomal subunit.

Its function is as follows. One of the primary rRNA binding proteins, this protein initially binds near the 5'-end of the 23S rRNA. It is important during the early stages of 50S assembly. It makes multiple contacts with different domains of the 23S rRNA in the assembled 50S subunit and ribosome. Forms part of the polypeptide exit tunnel. The chain is Large ribosomal subunit protein uL4 from Cyanothece sp. (strain PCC 7425 / ATCC 29141).